A 494-amino-acid chain; its full sequence is Ammonium transporter Rh type C (494 aa).

Over 1–22 (MGNFIQGCKDYFSQQKNTNIRL) the chain is Cytoplasmic. The chain crosses the membrane as a helical span at residues 23–43 (TLPVVCFVWQIAMIILFGVFI). The Extracellular portion of the chain corresponds to 44–74 (RYDEESDTHWVETKAHDNITSDIENDFYFRY). An N-linked (GlcNAc...) asparagine glycan is attached at Asn-61. The helical transmembrane segment at 75–95 (PSFQDVHVMIFVGFGFLMTFL) threads the bilayer. The Cytoplasmic segment spans residues 96–99 (KRYS). A helical membrane pass occupies residues 100 to 120 (FGAVGFNFLIASFGLQWALLM). The Extracellular portion of the chain corresponds to 121–133 (QGWFHSLDPQTGK). The helical transmembrane segment at 134 to 154 (IFIGVESLINADFCVAGCLIA) threads the bilayer. At 155–166 (YGAVLGKVSPVQ) the chain is on the cytoplasmic side. The helical transmembrane segment at 167–187 (LLVMTLFGVTLFAVEEYIILN) threads the bilayer. Over 188–194 (LLHARDA) the chain is Extracellular. The helical transmembrane segment at 195-215 (GGSMVIHTFGGYYGLTISWVL) threads the bilayer. At 216-234 (YRPNLHQSKRMQGSVYHSD) the chain is on the cytoplasmic side. Residues 235–255 (IFAMIGTLFLWMFWPSFNSAI) traverse the membrane as a helical segment. Residues 256 to 265 (TDHGDGQHRA) lie on the Extracellular side of the membrane. The chain crosses the membrane as a helical span at residues 266 to 286 (VINTYLCLASTVLTTVAISSF). Topologically, residues 287–297 (SQKTGKLDMVH) are cytoplasmic. A helical transmembrane segment spans residues 298–318 (IQNSTLAGGVALGTAAEFMIS). Residue Pro-319 is a topological domain, extracellular. Residues 320–340 (YGALIVGFLCGIISTMGYIFI) traverse the membrane as a helical segment. The Cytoplasmic portion of the chain corresponds to 341–358 (SPFLEKTLKIQDTCGIHN). Residues 359–379 (LHAMPGVIGGIVGAITAAAAS) form a helical membrane-spanning segment. Topologically, residues 380 to 411 (ESVYGKHALINTFDFTGDFKDRTVLTQGGYQA) are extracellular. Residues 412–432 (AGMCVSIVFGVAGGAIVGSIL) traverse the membrane as a helical segment. Residues 433–494 (KLPIWGDPAD…SNFSVEHCES (62 aa)) are Cytoplasmic-facing.

The protein belongs to the ammonium transporter (TC 2.A.49) family. Rh subfamily. Homotrimer.

The protein resides in the apical cell membrane. In terms of biological role, functions as an ammonia transporter. May play a role in the elimination of ammonia in the gill. The sequence is that of Ammonium transporter Rh type C (rhcg) from Oncorhynchus mykiss (Rainbow trout).